A 313-amino-acid polypeptide reads, in one-letter code: L-2-hydroxycarboxylate dehydrogenase (NAD(P)(+)) (313 aa).

Residues 7–13 (GASGRVG) and 34–37 (REHS) contribute to the NADP(+) site. Substrate contacts are provided by R86 and R92. Residues N99 and 121–123 (ITN) each bind NADP(+). The substrate site is built by N123 and R154. H178 (proton acceptor) is an active-site residue.

This sequence belongs to the LDH/MDH superfamily. In terms of assembly, homotetramer.

Its subcellular location is the cytoplasm. It catalyses the reaction a (2S)-2-hydroxycarboxylate + NAD(+) = a 2-oxocarboxylate + NADH + H(+). It carries out the reaction a (2S)-2-hydroxycarboxylate + NADP(+) = a 2-oxocarboxylate + NADPH + H(+). Its function is as follows. Catalyzes the reversible oxidation of (S)-malate and (S)-sulfolactate to oxaloacetate and sulfopyruvate, respectively. Can use both NADH and NADPH, although activity is higher with NADPH. Oxidation of (S)-sulfolactate is observed only in the presence of NADP(+). Can also oxidize tartrate. Cannot reduce pyruvate, nor alpha-ketoglutarate. This Methanocaldococcus jannaschii (strain ATCC 43067 / DSM 2661 / JAL-1 / JCM 10045 / NBRC 100440) (Methanococcus jannaschii) protein is L-2-hydroxycarboxylate dehydrogenase (NAD(P)(+)) (mdh).